Here is a 197-residue protein sequence, read N- to C-terminus: Segregation and condensation protein B (197 aa).

Belongs to the ScpB family. As to quaternary structure, homodimer. Homodimerization may be required to stabilize the binding of ScpA to the Smc head domains. Component of a cohesin-like complex composed of ScpA, ScpB and the Smc homodimer, in which ScpA and ScpB bind to the head domain of Smc. The presence of the three proteins is required for the association of the complex with DNA.

Its subcellular location is the cytoplasm. Participates in chromosomal partition during cell division. May act via the formation of a condensin-like complex containing Smc and ScpA that pull DNA away from mid-cell into both cell halves. This is Segregation and condensation protein B from Syntrophotalea carbinolica (strain DSM 2380 / NBRC 103641 / GraBd1) (Pelobacter carbinolicus).